Reading from the N-terminus, the 252-residue chain is MSGHSKWATTKHKKAVIDARRAKSFAKLIKNIEVAAKIGGADLSGNPTLVDAVQKAKKTSVPNDNIDRAIKRGAGLTGESIDYTTIMYEGYGPGGVALLIECLTENKNRAAAEVRTAMTRNGGTMADPGSVAYNFHRKGVIVVPHADGVDEDAVLVAVLEAGAEEVTDLGESFEVLTEATDLVAARTALQAAGIDYDSADAEFVATVTVQTDAEAARKVFRLIDALEDSDDVQNVYTTLDLSAEVQAQLDDE.

The protein belongs to the TACO1 family.

The protein localises to the cytoplasm. This chain is Probable transcriptional regulatory protein Lxx10750, found in Leifsonia xyli subsp. xyli (strain CTCB07).